A 478-amino-acid polypeptide reads, in one-letter code: Probable cytosolic Fe-S cluster assembly factor AAEL012261 (478 aa).

[4Fe-4S] cluster contacts are provided by Cys-23, Cys-69, Cys-72, Cys-75, Cys-189, Cys-245, Cys-396, and Cys-400.

It belongs to the NARF family.

Functionally, component of the cytosolic iron-sulfur (Fe/S) protein assembly machinery. Required for maturation of extramitochondrial Fe/S proteins. This chain is Probable cytosolic Fe-S cluster assembly factor AAEL012261, found in Aedes aegypti (Yellowfever mosquito).